The chain runs to 463 residues: D(5)-like dopamine receptor (463 aa).

Residues 1 to 39 (MENFYNETEPTEPRGGVDPLRVVTAAEDVPAPVGGVSVR) are Extracellular-facing. A glycan (N-linked (GlcNAc...) asparagine) is linked at Asn-6. The helical transmembrane segment at 40–65 (ALTGCVLCALIVSTLLGNTLVCAAVI) threads the bilayer. Residues 66 to 76 (KFRHLRSKVTN) are Cytoplasmic-facing. A helical transmembrane segment spans residues 77–103 (AFVVSLAVSDLFVAVLVMPWRAVSEVA). The Extracellular portion of the chain corresponds to 104-112 (GVWLFGRFC). A disulfide bond links Cys-112 and Cys-194. The chain crosses the membrane as a helical span at residues 113–135 (DTWVAFDIMCSTASILNLCVISM). Residues 136–154 (DRYWAISNPFRYERRMTRR) lie on the Cytoplasmic side of the membrane. Residues 155-180 (FAFLMIAVAWTLSVLISFIPVQLNWH) traverse the membrane as a helical segment. Over 181-198 (RADNNSSAHEQGDCNASL) the chain is Extracellular. Residues 199-223 (NRTYAISSSLISFYIPVLIMVGTYT) traverse the membrane as a helical segment. The Cytoplasmic portion of the chain corresponds to 224 to 273 (RIFRIAQTQIRRISSLERAAGQRAQNQSHRASTHDESALKTSFKRETKVL). The chain crosses the membrane as a helical span at residues 274-301 (KTLSVIMGVFVFCWLPFFVLNCVVPFCD). Over 302–315 (VDKVGEPPCVSDTT) the chain is Extracellular. A helical transmembrane segment spans residues 316-337 (FNIFVWFGWANSSLNPVIYAFN). Residues 338 to 463 (ADFRKAFTTI…PGQIQDLGDL (126 aa)) are Cytoplasmic-facing.

Belongs to the G-protein coupled receptor 1 family.

It is found in the cell membrane. Its function is as follows. Receptor for dopamine. This chain is D(5)-like dopamine receptor (dl), found in Takifugu rubripes (Japanese pufferfish).